We begin with the raw amino-acid sequence, 303 residues long: Heme A synthase (303 aa).

Residues 1 to 8 (MFGKKNLK) lie on the Cytoplasmic side of the membrane. Residues 9 to 29 (WLGVVATLMMTFVQLGGALVT) form a helical membrane-spanning segment. The Extracellular portion of the chain corresponds to 30–67 (KTGSADGCGSSWPLCHGALIPEFFPIDTIIELSHRAVS). C37 and C44 are disulfide-bonded. E60 is a catalytic residue. Heme o is bound at residue H63. The chain crosses the membrane as a helical span at residues 68 to 88 (ALSLLMVLWLVITAWKHIGYI). Topologically, residues 89 to 93 (KEIKP) are cytoplasmic. Residues 94–114 (LSIISVGFLLLQALIGAAAVI) traverse the membrane as a helical segment. Residues 115-125 (WQQNDYVLALH) are Extracellular-facing. Position 125 (H125) interacts with heme o. The helical transmembrane segment at 126–146 (FGISLISFSSVFLITLIIFSI) threads the bilayer. The Cytoplasmic portion of the chain corresponds to 147–163 (DQKYEADELYIKKPLRR). Residues 164-184 (LTWLMAIIIYCGVYTGALVRH) traverse the membrane as a helical segment. Residues 185 to 215 (ADASLAYGGWPLPFHDLVPHSEQDWVQLTHR) lie on the Extracellular side of the membrane. A heme b-binding site is contributed by H214. Residues 216-236 (IMAFIVFTIIMITYIHAVKNY) traverse the membrane as a helical segment. Residues 237–244 (PNNRTVHY) are Cytoplasmic-facing. A helical membrane pass occupies residues 245–265 (GYTAAFILVILQVITGALSIM). At 266 to 270 (TNVNL) the chain is on the extracellular side. The helical transmembrane segment at 271–291 (IIALFHALFITYLFGMTTYFI) threads the bilayer. H276 provides a ligand contact to heme b. The Cytoplasmic segment spans residues 292–303 (MLMLRSVRSDKQ).

The protein belongs to the COX15/CtaA family. Type 1 subfamily. In terms of assembly, interacts with CtaB. Heme b serves as cofactor.

The protein resides in the cell membrane. The catalysed reaction is Fe(II)-heme o + 2 A + H2O = Fe(II)-heme a + 2 AH2. It functions in the pathway porphyrin-containing compound metabolism; heme A biosynthesis; heme A from heme O: step 1/1. Catalyzes the conversion of heme O to heme A by two successive hydroxylations of the methyl group at C8. The first hydroxylation forms heme I, the second hydroxylation results in an unstable dihydroxymethyl group, which spontaneously dehydrates, resulting in the formyl group of heme A. The protein is Heme A synthase of Staphylococcus aureus (strain Mu3 / ATCC 700698).